The sequence spans 775 residues: Coiled-coil domain-containing protein R3HCC1L (775 aa).

2 stretches are compositionally biased toward basic and acidic residues: residues methionine 1–aspartate 16 and glutamate 65–glutamate 112. 2 disordered regions span residues methionine 1–proline 127 and leucine 235–valine 262. Positions arginine 7 to glycine 27 are EJC-binding motif; may mediate interaction with the EJC. Positions leucine 235–glutamate 247 are enriched in polar residues. At serine 671 the chain carries Phosphoserine. The residue at position 695 (threonine 695) is a Phosphothreonine. Residues arginine 734 to isoleucine 766 are a coiled coil. The interval arginine 755–valine 775 is disordered.

In terms of assembly, may interact with the exon junction complex (EJC) composed at least of CASC3, EIF4A3, MAGOH and RBM8A.

This is Coiled-coil domain-containing protein R3HCC1L (R3hcc1l) from Mus musculus (Mouse).